The chain runs to 581 residues: Arginine--tRNA ligase (581 aa).

The short motif at 126–136 (PNLAKEMHVGH) is the 'HIGH' region element.

This sequence belongs to the class-I aminoacyl-tRNA synthetase family. As to quaternary structure, monomer.

The protein resides in the cytoplasm. The enzyme catalyses tRNA(Arg) + L-arginine + ATP = L-arginyl-tRNA(Arg) + AMP + diphosphate. In Shewanella sediminis (strain HAW-EB3), this protein is Arginine--tRNA ligase.